A 282-amino-acid chain; its full sequence is tRNA (guanine-N(1)-)-methyltransferase (282 aa).

145 to 150 is a binding site for S-adenosyl-L-methionine; it reads IGDYVL.

It belongs to the RNA methyltransferase TrmD family. In terms of assembly, homodimer.

It is found in the cytoplasm. The enzyme catalyses guanosine(37) in tRNA + S-adenosyl-L-methionine = N(1)-methylguanosine(37) in tRNA + S-adenosyl-L-homocysteine + H(+). Functionally, specifically methylates guanosine-37 in various tRNAs. The sequence is that of tRNA (guanine-N(1)-)-methyltransferase from Streptomyces avermitilis (strain ATCC 31267 / DSM 46492 / JCM 5070 / NBRC 14893 / NCIMB 12804 / NRRL 8165 / MA-4680).